Here is an 817-residue protein sequence, read N- to C-terminus: Protein kintoun (817 aa).

Disordered stretches follow at residues 233-259, 385-404, 410-445, and 473-503; these read AESTARSPASPAPKAVQRPEPTEPRCS, AGAREESADSSGADHGRKSC, AGTAKAEGELVPEPEQDFGGDSVTPLGPGEGTTPEN, and VQTSEEQEGTCHDTSGSDMGGPGTESIKPLC. A compositionally biased stretch (basic and acidic residues) spans 386–401; the sequence is GAREESADSSGADHGR. Phosphoserine is present on residues Ser-622 and Ser-631. Residues 653 to 692 form a disordered region; sequence ECSDPDGLQGKEKGVKEECPLSEKENTEHSTTSTADSNSS. Basic and acidic residues predominate over residues 661-680; sequence QGKEKGVKEECPLSEKENTE. Residues 681–692 are compositionally biased toward polar residues; the sequence is HSTTSTADSNSS.

It belongs to the PIH1 family. Kintoun subfamily. Interacts with CFAP300. Interacts with DNAI2 and HSPA1A. Interacts with DNAAF4. Interacts with DNAAF6/PIH1D3.

The protein resides in the cytoplasm. It is found in the dynein axonemal particle. Required for cytoplasmic pre-assembly of axonemal dyneins, thereby playing a central role in motility in cilia and flagella. Involved in pre-assembly of dynein arm complexes in the cytoplasm before intraflagellar transport loads them for the ciliary compartment. In Rattus norvegicus (Rat), this protein is Protein kintoun.